A 475-amino-acid chain; its full sequence is Neuronal acetylcholine receptor subunit alpha-5 (475 aa).

A signal peptide spans 1 to 29 (MAAPGWGRWVLGLGPLLLQVFLPFQLVAG). At 30–261 (RWGPEGAGGG…VIKRLPLFYT (232 aa)) the chain is on the extracellular side. A disulfide bridge connects residues Cys177 and Cys191. N-linked (GlcNAc...) asparagine glycans are attached at residues Asn190 and Asn236. Cys241 and Cys242 form a disulfide bridge. A run of 3 helical transmembrane segments spans residues 262–282 (LFLI…FYLP), 289–309 (ICLC…IEEI), and 324–344 (LVFT…AINI). The Cytoplasmic portion of the chain corresponds to 345 to 437 (HHRSSSTHDA…KFIAQVLDRM (93 aa)). A helical membrane pass occupies residues 438-458 (FLWTFLLVSVVGSLGLFVPVI). Over 459-475 (YKWANIIVPIHIGNENK) the chain is Extracellular.

Belongs to the ligand-gated ion channel (TC 1.A.9) family. Acetylcholine receptor (TC 1.A.9.1) subfamily. Alpha-5/CHRNA5 sub-subfamily. As to quaternary structure, neuronal AChR that forms heteropentamers composed of two different type of subunits: alpha and non-alpha (beta). CHRNA5/alpha-5 subunit is only able to form functional nAChRs when co-assembled with another alpha subunit, can be combined to CHRNA4/alpha-4 or CHRNA3/alpha-3 and CHRNB4/beta-4 or CHRNB2/beta-2 to give rise to functional receptors. Interacts with LYPD6.

The protein localises to the synaptic cell membrane. The protein resides in the cell membrane. The enzyme catalyses Ca(2+)(in) = Ca(2+)(out). It carries out the reaction K(+)(in) = K(+)(out). It catalyses the reaction Na(+)(in) = Na(+)(out). Its activity is regulated as follows. Activated by a myriad of ligands such as acetylcholine, cytisine, nicotine, choline and epibatidine. Functionally, component of neuronal acetylcholine receptors (nAChRs) that function as pentameric, ligand-gated cation channels with high calcium permeability among other activities. nAChRs are excitatory neurotrasnmitter receptors formed by a collection of nAChR subunits known to mediate synaptic transmission in the nervous system and the neuromuscular junction. Each nAchR subunit confers differential attributes to channel properties, including activation, deactivation and desensitization kinetics, pH sensitivity, cation permeability, and binding to allosteric modulators. Has an accessory rather than functional role and is only able to form functional nAChRs when co-assembled with another beta subunit. Participates in pentameric assemblies along with CHRNA3, CHRNA4, CHRNB2 and CHRNB4. Increases receptor sensitivity to acetylcholine and nicotine when associated with CHRNA4 and CHRNB2. Plays a role in nicotine addiction. The polypeptide is Neuronal acetylcholine receptor subunit alpha-5 (CHRNA5) (Bos taurus (Bovine)).